The chain runs to 504 residues: Cobyric acid synthase (504 aa).

In terms of domain architecture, GATase cobBQ-type spans 254–442 (AIDVAVIRYP…MHDLFHNDMF (189 aa)). Cysteine 336 (nucleophile) is an active-site residue. Residue histidine 434 is part of the active site.

It belongs to the CobB/CobQ family. CobQ subfamily.

It functions in the pathway cofactor biosynthesis; adenosylcobalamin biosynthesis. Functionally, catalyzes amidations at positions B, D, E, and G on adenosylcobyrinic A,C-diamide. NH(2) groups are provided by glutamine, and one molecule of ATP is hydrogenolyzed for each amidation. The protein is Cobyric acid synthase of Anoxybacillus flavithermus (strain DSM 21510 / WK1).